Here is a 343-residue protein sequence, read N- to C-terminus: GTPase Obg (343 aa).

The Obg domain occupies 1-159; sequence MQFIDHATIC…RQLRLELKLL (159 aa). The OBG-type G domain occupies 160–328; sequence AEVGLIGLPN…LLRLVWQWLD (169 aa). Residues 166–173, 191–195, 213–216, 280–283, and 309–311 contribute to the GTP site; these read GLPNAGKS, FTTLV, DIPG, NKID, and SSA. 2 residues coordinate Mg(2+): Ser173 and Thr193.

The protein belongs to the TRAFAC class OBG-HflX-like GTPase superfamily. OBG GTPase family. In terms of assembly, monomer. It depends on Mg(2+) as a cofactor.

The protein localises to the cytoplasm. Functionally, an essential GTPase which binds GTP, GDP and possibly (p)ppGpp with moderate affinity, with high nucleotide exchange rates and a fairly low GTP hydrolysis rate. Plays a role in control of the cell cycle, stress response, ribosome biogenesis and in those bacteria that undergo differentiation, in morphogenesis control. The sequence is that of GTPase Obg from Synechococcus elongatus (strain ATCC 33912 / PCC 7942 / FACHB-805) (Anacystis nidulans R2).